A 391-amino-acid chain; its full sequence is MAEDGSPKIYSRPPRDNSKTPTEADIFFGADNTIPKSETTITSEGDHVTSVNDCTPDGDFSTTVNKLTPTKEKLKLEDDIEGCLKLTTLPEKEITTPTETPNSKPKGSITENFIPVKIGNTSSPVGTVSLIDFSSNTAKEDIFLTTIDTGEKEVVPTTEFSGTLEDSAADVEDASGFPDESTETDVPSSATSDAPDDGAVQVTDSFSPEAGVPPSTEKEVTTIPDITNIAEENVTEIKLIVSEDRPKTVTKLSDSEEEKFITVFELTNSAEKAKDNVEDPLNDEESTDGANDWMEKETASEAESHAVLLTAVESRYDFIVTASETDNVMEESHVNTTDLPENETTESVTNVTEELPSVTSIVDTLKDKEDLSTTNSGLFKLLKEEPDDLMM.

3 disordered regions span residues 1–23 (MAED…TPTE), 90–110 (PEKE…GSIT), and 152–221 (KEVV…KEVT). Over residues 90-101 (PEKEITTPTETP) the composition is skewed to low complexity. Residues serine 253 and serine 269 each carry the phosphoserine modification. The tract at residues 271–299 (EKAKDNVEDPLNDEESTDGANDWMEKETA) is disordered. Residues 278 to 287 (EDPLNDEEST) are compositionally biased toward acidic residues. 5 positions are modified to phosphoserine: serine 314, serine 347, serine 357, serine 372, and serine 376. Residues 330-351 (EESHVNTTDLPENETTESVTNV) are disordered.

In terms of tissue distribution, detected only in testis. Expressed from stages X to VIII of the seminiferous epithelial cycle. Expressed from step 13 to step 16 of spermatid development (at protein level).

It localises to the cytoplasm. The protein localises to the mitochondrion inner membrane. The protein resides in the cell projection. It is found in the cilium. Its subcellular location is the flagellum. It localises to the cytoplasmic vesicle. The protein localises to the secretory vesicle. The protein resides in the acrosome. Its function is as follows. Calcium-binding protein. Essential for maintaining the structural integrity of the sperm flagella. The polypeptide is Calcium-binding and spermatid-specific protein 1 (Cabs1) (Mus musculus (Mouse)).